Here is a 326-residue protein sequence, read N- to C-terminus: Malate dehydrogenase (326 aa).

11–17 (GAAGQIG) contributes to the NAD(+) binding site. Residues Arg92 and Arg98 each contribute to the substrate site. Residues Asn105, Gln112, and 129-131 (VGN) contribute to the NAD(+) site. Substrate is bound by residues Asn131 and Arg162. The active-site Proton acceptor is His187.

Belongs to the LDH/MDH superfamily. MDH type 2 family.

It catalyses the reaction (S)-malate + NAD(+) = oxaloacetate + NADH + H(+). Functionally, catalyzes the reversible oxidation of malate to oxaloacetate. The polypeptide is Malate dehydrogenase (Chromobacterium violaceum (strain ATCC 12472 / DSM 30191 / JCM 1249 / CCUG 213 / NBRC 12614 / NCIMB 9131 / NCTC 9757 / MK)).